A 31-amino-acid polypeptide reads, in one-letter code: Cyclotide vibi-F (31 aa).

The segment at residues 1–31 (GTIPCGESCVFIPCLTSALGCSCKSKVCYKN) is a cross-link (cyclopeptide (Gly-Asn)). Intrachain disulfides connect cysteine 5–cysteine 21, cysteine 9–cysteine 23, and cysteine 14–cysteine 28.

In terms of processing, this is a cyclic peptide.

Functionally, probably participates in a plant defense mechanism. This chain is Cyclotide vibi-F, found in Viola biflora (Yellow wood violet).